The primary structure comprises 188 residues: Elongation factor P (188 aa).

At K34 the chain carries N6-(3,6-diaminohexanoyl)-5-hydroxylysine.

The protein belongs to the elongation factor P family. May be beta-lysylated on the epsilon-amino group of Lys-34 by the combined action of EpmA and EpmB, and then hydroxylated on the C5 position of the same residue by EpmC (if this protein is present). Lysylation is critical for the stimulatory effect of EF-P on peptide-bond formation. The lysylation moiety may extend toward the peptidyltransferase center and stabilize the terminal 3-CCA end of the tRNA. Hydroxylation of the C5 position on Lys-34 may allow additional potential stabilizing hydrogen-bond interactions with the P-tRNA.

It is found in the cytoplasm. Its pathway is protein biosynthesis; polypeptide chain elongation. In terms of biological role, involved in peptide bond synthesis. Alleviates ribosome stalling that occurs when 3 or more consecutive Pro residues or the sequence PPG is present in a protein, possibly by augmenting the peptidyl transferase activity of the ribosome. Modification of Lys-34 is required for alleviation. The protein is Elongation factor P of Citrobacter koseri (strain ATCC BAA-895 / CDC 4225-83 / SGSC4696).